The sequence spans 227 residues: Cytidylate kinase (227 aa).

ATP is bound at residue 12 to 20; the sequence is GPSGAGKGT.

Belongs to the cytidylate kinase family. Type 1 subfamily.

The protein resides in the cytoplasm. The catalysed reaction is CMP + ATP = CDP + ADP. It catalyses the reaction dCMP + ATP = dCDP + ADP. This is Cytidylate kinase from Photorhabdus laumondii subsp. laumondii (strain DSM 15139 / CIP 105565 / TT01) (Photorhabdus luminescens subsp. laumondii).